We begin with the raw amino-acid sequence, 422 residues long: Dipeptidase aclJ (422 aa).

The helical transmembrane segment at 28 to 45 (LAYSVTLTLVALFFTFAL) threads the bilayer. Residues His-77 and Asp-79 each contribute to the Zn(2+) site. N-linked (GlcNAc...) asparagine glycosylation occurs at Asn-96. Cys-128 and Cys-219 are disulfide-bonded. Glu-190 contributes to the Zn(2+) binding site. His-217 is a binding site for substrate. N-linked (GlcNAc...) asparagine glycosylation is present at Asn-270. The cysteines at positions 287 and 319 are disulfide-linked. The substrate site is built by Arg-291 and Asp-351.

The protein belongs to the metallo-dependent hydrolases superfamily. Peptidase M19 family. The cofactor is Zn(2+).

The protein localises to the membrane. It catalyses the reaction an L-aminoacyl-L-amino acid + H2O = 2 an L-alpha-amino acid. It functions in the pathway mycotoxin biosynthesis. Its function is as follows. Dipeptidase; part of the gene cluster that mediates the biosynthesis of aspirochlorine (or antibiotic A30641), an unusual halogenated spiro compound with distinctive antifungal properties due to selective inhibition of protein biosynthesis, and which is also active against bacteria, viruses, and murine tumor cells. The non-ribosomal peptide synthetase (NRPS) aclP is responsible the formation of the diketopiperazine (DKP) core from the condensation of 2 phenylalanine residues. One Phe residue is tailored into chlorotyrosine by hydroxylation and chlorination, whereas the second Phe undergoes an unprecedented C-C bond cleavage to be converted into glycine. After formation of the DKP, sulfur is incorporated into the DKP by conjugation with glutathione by aclG, followed by its stepwise degradation to the thiol by aclI, aclJ and aclK, and the dithiol oxidation by aclT. In addition, oxygenases (aclB, aclC, aclL and aclO) and O-methyltransferases (aclM and aclU) act as tailoring enzymes to produce the intermediate dechloroaspirochlorine. Ultimately, chlorination of dechloroaspirochlorine by the halogenase aclH is the last step in the aspirochlorine pathway. The sequence is that of Dipeptidase aclJ from Aspergillus oryzae (strain ATCC 42149 / RIB 40) (Yellow koji mold).